Reading from the N-terminus, the 427-residue chain is Beta-porphyranase D (427 aa).

A signal peptide spans 1 to 19; that stretch reads MILKQAILTLVLVNANLFA. The segment at 23–45 is disordered; that stretch reads PKTYSSTDKETRQGPPKPPMGKR. The GH16 domain occupies 32-308; that stretch reads ETRQGPPKPP…WVRAYRLVDV (277 aa). Residues Trp73, Arg76, Glu168, Glu173, and Glu272 each contribute to the substrate site. Glu168 serves as the catalytic Nucleophile. Glu173 acts as the Proton donor in catalysis.

Belongs to the glycosyl hydrolase 16 family.

Its subcellular location is the periplasm. The catalysed reaction is Hydrolysis of beta-D-galactopyranose-(1-&gt;4)-alpha-L-galactopyranose-6-sulfate linkages in porphyran.. In terms of biological role, cleaves the sulfated polysaccharide porphyran at the (1-&gt;4) linkages between beta-D-galactopyranose and alpha-L-galactopyranose-6-sulfate, forming mostly the disaccharide alpha-L-galactopyranose-6-sulfate-(1-&gt;3)-beta-D-galactose. In Zobellia galactanivorans (strain DSM 12802 / CCUG 47099 / CIP 106680 / NCIMB 13871 / Dsij), this protein is Beta-porphyranase D (porD).